The following is a 282-amino-acid chain: Elongation factor Ts (282 aa).

The interval 80–83 (TDFV) is involved in Mg(2+) ion dislocation from EF-Tu.

Belongs to the EF-Ts family.

It localises to the cytoplasm. Functionally, associates with the EF-Tu.GDP complex and induces the exchange of GDP to GTP. It remains bound to the aminoacyl-tRNA.EF-Tu.GTP complex up to the GTP hydrolysis stage on the ribosome. The protein is Elongation factor Ts of Chlamydia trachomatis serovar L2 (strain ATCC VR-902B / DSM 19102 / 434/Bu).